A 368-amino-acid polypeptide reads, in one-letter code: Phosphate acyltransferase (368 aa).

Belongs to the PlsX family. In terms of assembly, homodimer. Probably interacts with PlsY.

It is found in the cytoplasm. The catalysed reaction is a fatty acyl-[ACP] + phosphate = an acyl phosphate + holo-[ACP]. It participates in lipid metabolism; phospholipid metabolism. Functionally, catalyzes the reversible formation of acyl-phosphate (acyl-PO(4)) from acyl-[acyl-carrier-protein] (acyl-ACP). This enzyme utilizes acyl-ACP as fatty acyl donor, but not acyl-CoA. In Granulibacter bethesdensis (strain ATCC BAA-1260 / CGDNIH1), this protein is Phosphate acyltransferase.